The following is a 336-amino-acid chain: tRNA N6-adenosine threonylcarbamoyltransferase (336 aa).

Residues His112 and His116 each contribute to the Fe cation site. Substrate contacts are provided by residues 136 to 140 (LVSGG), Asp169, Gly182, and Asn276. Asp304 lines the Fe cation pocket.

This sequence belongs to the KAE1 / TsaD family. Fe(2+) is required as a cofactor.

It is found in the cytoplasm. It catalyses the reaction L-threonylcarbamoyladenylate + adenosine(37) in tRNA = N(6)-L-threonylcarbamoyladenosine(37) in tRNA + AMP + H(+). In terms of biological role, required for the formation of a threonylcarbamoyl group on adenosine at position 37 (t(6)A37) in tRNAs that read codons beginning with adenine. Is involved in the transfer of the threonylcarbamoyl moiety of threonylcarbamoyl-AMP (TC-AMP) to the N6 group of A37, together with TsaE and TsaB. TsaD likely plays a direct catalytic role in this reaction. The polypeptide is tRNA N6-adenosine threonylcarbamoyltransferase (Francisella tularensis subsp. novicida (strain U112)).